Consider the following 239-residue polypeptide: Ribosome assembly factor mrt4 (239 aa).

The protein belongs to the universal ribosomal protein uL10 family. Associates with the pre-60S ribosomal particle.

It is found in the nucleus. It localises to the nucleolus. The protein resides in the cytoplasm. Component of the ribosome assembly machinery. Nuclear paralog of the ribosomal protein P0, it binds pre-60S subunits at an early stage of assembly in the nucleolus, and is replaced by P0 in cytoplasmic pre-60S subunits and mature 80S ribosomes. This Candida glabrata (strain ATCC 2001 / BCRC 20586 / JCM 3761 / NBRC 0622 / NRRL Y-65 / CBS 138) (Yeast) protein is Ribosome assembly factor mrt4.